The chain runs to 227 residues: UPF0173 metal-dependent hydrolase Oter_4201 (227 aa).

Belongs to the UPF0173 family.

The sequence is that of UPF0173 metal-dependent hydrolase Oter_4201 from Opitutus terrae (strain DSM 11246 / JCM 15787 / PB90-1).